The following is a 380-amino-acid chain: Cytochrome b (380 aa).

A run of 4 helical transmembrane segments spans residues 34-54, 78-99, 114-134, and 179-199; these read FGSLLAVCLATQIITGLLLAM, WLIRNLHANGASFFFICIFLHI, WNTGVVLLLTLMATAFVGYVL, and FFALHFLLPFVIAGITIIHLT. Heme b contacts are provided by H84 and H98. Heme b is bound by residues H183 and H197. H202 serves as a coordination point for a ubiquinone. The next 4 helical transmembrane spans lie at 227-247, 289-309, 321-341, and 348-368; these read LKDILGLTLMFIPFLTLALFS, LGGVLALAASVLILLLIPFLH, LSQILFWLLVANLLILTWIGS, and FIIIGQMASFSYFSILLILFP.

It belongs to the cytochrome b family. As to quaternary structure, the cytochrome bc1 complex contains 11 subunits: 3 respiratory subunits (MT-CYB, CYC1 and UQCRFS1), 2 core proteins (UQCRC1 and UQCRC2) and 6 low-molecular weight proteins (UQCRH/QCR6, UQCRB/QCR7, UQCRQ/QCR8, UQCR10/QCR9, UQCR11/QCR10 and a cleavage product of UQCRFS1). This cytochrome bc1 complex then forms a dimer. The cofactor is heme b.

The protein localises to the mitochondrion inner membrane. Component of the ubiquinol-cytochrome c reductase complex (complex III or cytochrome b-c1 complex) that is part of the mitochondrial respiratory chain. The b-c1 complex mediates electron transfer from ubiquinol to cytochrome c. Contributes to the generation of a proton gradient across the mitochondrial membrane that is then used for ATP synthesis. This is Cytochrome b (MT-CYB) from Pavo muticus (Green peafowl).